We begin with the raw amino-acid sequence, 133 residues long: Protein msa (133 aa).

4 consecutive transmembrane segments (helical) span residues 3–23 (YLILSLVANLLVFGVLSAIGL), 27–47 (ILAAMMIVLVIPIMISGILFF), 55–75 (YIFFNIIFIDFYYYIYNVHLM), and 103–123 (FGFDEILFYTLYLLLILIVLY).

Its subcellular location is the cell membrane. In terms of biological role, accessory element involved in the expression of sarA and several virulence factors. Modulates SarA production and/or function in a strain-dependent manner. Affects the transcription of the accessory gene regulator (agr) and genes encoding virulence factors including alpha toxin (hla) and protein A (spa). This is Protein msa (msa) from Staphylococcus aureus (strain USA300).